Consider the following 525-residue polypeptide: Mitoguardin (525 aa).

Residues 26 to 45 traverse the membrane as a helical segment; it reads VVLFSLTAGVALMSVLSRFL. Positions 47–67 are enriched in basic residues; sequence RRKPPRPPRRARKYTGRRNRN. Disordered regions lie at residues 47–73 and 210–239; these read RRKPPRPPRRARKYTGRRNRNSMRSPN and DEAEEEAGEADDDRRSRKSGSVLSRAGSDP. The span at 211–220 shows a compositional bias: acidic residues; sequence EAEEEAGEAD.

The protein belongs to the mitoguardin family. In terms of assembly, interacts with zuc.

Its subcellular location is the mitochondrion outer membrane. Regulator of mitochondrial fusion required to maintain neuronal homeostasis. The polypeptide is Mitoguardin (Drosophila melanogaster (Fruit fly)).